Consider the following 406-residue polypeptide: Glutamyl-tRNA reductase (406 aa).

Substrate contacts are provided by residues 49–52 (TCHR), Ser107, 112–114 (EPQ), and Gln118. The active-site Nucleophile is the Cys50. Residue 187 to 192 (GAGETG) coordinates NADP(+).

It belongs to the glutamyl-tRNA reductase family. In terms of assembly, homodimer.

The enzyme catalyses (S)-4-amino-5-oxopentanoate + tRNA(Glu) + NADP(+) = L-glutamyl-tRNA(Glu) + NADPH + H(+). Its pathway is porphyrin-containing compound metabolism; protoporphyrin-IX biosynthesis; 5-aminolevulinate from L-glutamyl-tRNA(Glu): step 1/2. Functionally, catalyzes the NADPH-dependent reduction of glutamyl-tRNA(Glu) to glutamate 1-semialdehyde (GSA). This is Glutamyl-tRNA reductase from Thermomicrobium roseum (strain ATCC 27502 / DSM 5159 / P-2).